We begin with the raw amino-acid sequence, 1051 residues long: Carbamoyl phosphate synthase large chain (1051 aa).

A carboxyphosphate synthetic domain region spans residues 1 to 399; sequence MKETPKKVLV…SLQKAVRMLD (399 aa). The ATP site is built by Arg127, Arg167, Gly173, Gly174, Lys206, Leu208, Glu213, Gly239, Val240, His241, Gln282, and Glu296. The ATP-grasp 1 domain maps to 131–325; it reads RETMIENNLP…LAYVSAKLAL (195 aa). 3 residues coordinate Mg(2+): Gln282, Glu296, and Asn298. Positions 282, 296, and 298 each coordinate Mn(2+). Residues 400 to 548 are oligomerization domain; that stretch reads IGEPGVVGGK…LTYNGTEDDL (149 aa). The tract at residues 549-930 is carbamoyl phosphate synthetic domain; that stretch reads EFSQGNKLLM…LKSWLSSIPN (382 aa). The ATP-grasp 2 domain maps to 673 to 863; the sequence is SKLLDKLGIS…LINESMKAIF (191 aa). Arg709, Lys748, Ile750, Glu755, Gly779, Val780, His781, Ser782, Gln822, and Glu834 together coordinate ATP. Residues Gln822, Glu834, and Asn836 each coordinate Mg(2+). Residues Gln822, Glu834, and Asn836 each coordinate Mn(2+). Positions 930–1051 constitute an MGS-like domain; that stretch reads NRIPNKNGIA…FEISEYGGGI (122 aa). An allosteric domain region spans residues 931–1051; that stretch reads RIPNKNGIAL…FEISEYGGGI (121 aa).

It belongs to the CarB family. Composed of two chains; the small (or glutamine) chain promotes the hydrolysis of glutamine to ammonia, which is used by the large (or ammonia) chain to synthesize carbamoyl phosphate. Tetramer of heterodimers (alpha,beta)4. Mg(2+) serves as cofactor. Requires Mn(2+) as cofactor.

It carries out the reaction hydrogencarbonate + L-glutamine + 2 ATP + H2O = carbamoyl phosphate + L-glutamate + 2 ADP + phosphate + 2 H(+). The catalysed reaction is hydrogencarbonate + NH4(+) + 2 ATP = carbamoyl phosphate + 2 ADP + phosphate + 2 H(+). It functions in the pathway amino-acid biosynthesis; L-arginine biosynthesis; carbamoyl phosphate from bicarbonate: step 1/1. The protein operates within pyrimidine metabolism; UMP biosynthesis via de novo pathway; (S)-dihydroorotate from bicarbonate: step 1/3. Large subunit of the glutamine-dependent carbamoyl phosphate synthetase (CPSase). CPSase catalyzes the formation of carbamoyl phosphate from the ammonia moiety of glutamine, carbonate, and phosphate donated by ATP, constituting the first step of 2 biosynthetic pathways, one leading to arginine and/or urea and the other to pyrimidine nucleotides. The large subunit (synthetase) binds the substrates ammonia (free or transferred from glutamine from the small subunit), hydrogencarbonate and ATP and carries out an ATP-coupled ligase reaction, activating hydrogencarbonate by forming carboxy phosphate which reacts with ammonia to form carbamoyl phosphate. This chain is Carbamoyl phosphate synthase large chain, found in Saccharolobus islandicus (strain M.16.4 / Kamchatka #3) (Sulfolobus islandicus).